Reading from the N-terminus, the 295-residue chain is Protoheme IX farnesyltransferase (295 aa).

The next 9 helical transmembrane spans lie at 24-44 (IMYL…GSMH), 45-65 (PFLA…AGAI), 94-114 (SALE…AIAV), 117-137 (ISAA…TIWL), 144-164 (NIVI…AAVT), 171-191 (SFIL…ALSL), 216-236 (KYIL…ALFL), 240-260 (LLYL…AVSV), and 272-292 (MFSY…FCSI).

Belongs to the UbiA prenyltransferase family. Protoheme IX farnesyltransferase subfamily.

The protein resides in the cell membrane. It carries out the reaction heme b + (2E,6E)-farnesyl diphosphate + H2O = Fe(II)-heme o + diphosphate. Its pathway is porphyrin-containing compound metabolism; heme O biosynthesis; heme O from protoheme: step 1/1. Its function is as follows. Converts heme B (protoheme IX) to heme O by substitution of the vinyl group on carbon 2 of heme B porphyrin ring with a hydroxyethyl farnesyl side group. This chain is Protoheme IX farnesyltransferase, found in Wolbachia pipientis wMel.